A 265-amino-acid polypeptide reads, in one-letter code: UPF0354 protein BH3252 (265 aa).

This sequence belongs to the UPF0354 family.

The chain is UPF0354 protein BH3252 from Halalkalibacterium halodurans (strain ATCC BAA-125 / DSM 18197 / FERM 7344 / JCM 9153 / C-125) (Bacillus halodurans).